The sequence spans 112 residues: Nitrogen regulatory protein P-II (112 aa).

Tyrosine 51 is subject to O-UMP-tyrosine.

Belongs to the P(II) protein family. In terms of assembly, homotrimer.

In nitrogen-limiting conditions, when the ratio of Gln to 2-ketoglutarate decreases, P-II is uridylylated to P-II-UMP. P-II-UMP allows the deadenylation of glutamine synthetase (GS), thus activating the enzyme. Conversely, in nitrogen excess P-II is deuridylated and promotes the adenylation of GS. P-II indirectly controls the transcription of the GS gene (glnA). P-II prevents NR-II-catalyzed conversion of NR-I to NR-I-phosphate, the transcriptional activator of glnA. When P-II is uridylylated to P-II-UMP, these events are reversed. The polypeptide is Nitrogen regulatory protein P-II (glnB) (Bradyrhizobium diazoefficiens (strain JCM 10833 / BCRC 13528 / IAM 13628 / NBRC 14792 / USDA 110)).